The primary structure comprises 375 residues: Putative type I specificity subunit S.MpnORF638P (375 aa).

It belongs to the type-I restriction system S methylase family. The methyltransferase is composed of M and S polypeptides.

The specificity (S) subunit of a type I methyltransferase (MTase); this subunit dictates DNA sequence specificity. The single R subunit has multiple frameshifts and is probably not expressed. The protein is Putative type I specificity subunit S.MpnORF638P of Mycoplasma pneumoniae (strain ATCC 29342 / M129 / Subtype 1) (Mycoplasmoides pneumoniae).